The primary structure comprises 162 residues: Transcription elongation factor GreA (162 aa).

A coiled-coil region spans residues 45–74 (ENAEYEAAREKQAFIEGRIKELEDMTARAE).

Belongs to the GreA/GreB family.

Necessary for efficient RNA polymerase transcription elongation past template-encoded arresting sites. The arresting sites in DNA have the property of trapping a certain fraction of elongating RNA polymerases that pass through, resulting in locked ternary complexes. Cleavage of the nascent transcript by cleavage factors such as GreA or GreB allows the resumption of elongation from the new 3'terminus. GreA releases sequences of 2 to 3 nucleotides. This chain is Transcription elongation factor GreA, found in Rickettsia typhi (strain ATCC VR-144 / Wilmington).